A 114-amino-acid polypeptide reads, in one-letter code: Fluoride-specific ion channel FluC 1 (114 aa).

A run of 3 helical transmembrane segments spans residues 28 to 48, 56 to 76, and 91 to 111; these read VFPWATFIINITGALLLGFLH, ILLLLGTGFLGGYTTFSTFQV, and IIYLLLTVICGILAAYCGSWL. Na(+) is bound by residues Gly-66 and Thr-69.

It belongs to the fluoride channel Fluc/FEX (TC 1.A.43) family.

It localises to the cell membrane. The catalysed reaction is fluoride(in) = fluoride(out). Its activity is regulated as follows. Na(+) is not transported, but it plays an essential structural role and its presence is essential for fluoride channel function. Its function is as follows. Fluoride-specific ion channel. Important for reducing fluoride concentration in the cell, thus reducing its toxicity. This Ligilactobacillus salivarius (strain UCC118) (Lactobacillus salivarius) protein is Fluoride-specific ion channel FluC 1.